Here is a 396-residue protein sequence, read N- to C-terminus: 1-deoxy-D-xylulose 5-phosphate reductoisomerase (396 aa).

Thr-10, Gly-11, Ser-12, Ile-13, and Asn-123 together coordinate NADPH. Lys-124 serves as a coordination point for 1-deoxy-D-xylulose 5-phosphate. Glu-125 serves as a coordination point for NADPH. Position 149 (Asp-149) interacts with Mn(2+). Residues Ser-150, Glu-151, Ser-185, and His-208 each coordinate 1-deoxy-D-xylulose 5-phosphate. Residue Glu-151 participates in Mn(2+) binding. Gly-214 lines the NADPH pocket. Positions 221, 226, 227, and 230 each coordinate 1-deoxy-D-xylulose 5-phosphate. Glu-230 contributes to the Mn(2+) binding site.

It belongs to the DXR family. The cofactor is Mg(2+). It depends on Mn(2+) as a cofactor.

The enzyme catalyses 2-C-methyl-D-erythritol 4-phosphate + NADP(+) = 1-deoxy-D-xylulose 5-phosphate + NADPH + H(+). It participates in isoprenoid biosynthesis; isopentenyl diphosphate biosynthesis via DXP pathway; isopentenyl diphosphate from 1-deoxy-D-xylulose 5-phosphate: step 1/6. In terms of biological role, catalyzes the NADPH-dependent rearrangement and reduction of 1-deoxy-D-xylulose-5-phosphate (DXP) to 2-C-methyl-D-erythritol 4-phosphate (MEP). The sequence is that of 1-deoxy-D-xylulose 5-phosphate reductoisomerase from Shewanella sp. (strain MR-7).